Consider the following 831-residue polypeptide: MKVSRRDFIKQTAIAATASVAGIPLGTEAANFVTDSEVTKLKWSKAPCRFCGTGCGVTVAVRDNKVVATQGDPQCEVNKGLNCVKGYFLSKIMYGQDRLTKPLLRMKNGKYDKNGEFAPVTWDQAFDEMERQFKRVLKEKGPTAVGMFGSGQWTVWEGYAASKLYKAGFRSNNIDPNARHCMASAVQGFMRTFGMDEPMGCYDDFEAADAFVLWGSNMAEMHPILWTRITDRRLSHPKTRVAVLSTFTHRSFDLADIPIIFTPQTDLAMLNYIANYIIQNNKVNKDFVNKHTVFKEGVTEIGYGLRPDHPLQKAAKNAANPGDSKPITFDDFAKFVSKYDADYVSKLSGVPKDKLRQLAELYADPNVKVMSLWTMGFNQHTRGSWVNNMVYNVHLLTGKIATPGNSPFSLTGQPSACGTAREVGTFSHRLPADMVVTNPKHREEAERIWKLPPGTIVEKPGYHAVLQNRMLRDGKLNAYWVQVNNNMQAAANIMEEALPGYRNPANFIVVSDAYPTVTALSADLILPSAMWVEKEGAYGNAERRTQFWHQLVDAPGDARSDLWQLMEFSKRFKVEEVWPAELVAKKPEYKGKTLFDVLYRNGQVDKFPIKEVSTEYHNAEAQAFGFYVQKGLFEEYASFGRGHGHDLAPFDRYHEERGLRWPVVNGKETRWRYREGSDPYVKAGTGFQFYGNPDGKAVIFALPYEPPPESPDKEYPFWLATGRVLEHWHSGSMTRRVPELYRAFPNAVVFMHPEDAKAMGLRRGVEVEVVSRRGRMRSRVETRGRDAPPRGLVFVPWFDASQLINKVTLDATCPISLQTDYKKCAVKIVKV.

A signal peptide (tat-type signal) is located at residues Met-1–Ala-29. Positions Leu-41–Asp-97 constitute a 4Fe-4S Mo/W bis-MGD-type domain. Cys-48, Cys-51, Cys-55, and Cys-83 together coordinate [4Fe-4S] cluster. Mo-bis(molybdopterin guanine dinucleotide) contacts are provided by residues Lys-85, Gln-152, Asn-177, Cys-181, Trp-214–Met-221, Ser-245–His-249, Gln-264–Asp-266, Met-375, Gln-379, Asn-485, Ser-511–Asp-512, Lys-534, Asp-561, and Thr-721–Ser-730. Trp-797 provides a ligand contact to substrate. 2 residues coordinate Mo-bis(molybdopterin guanine dinucleotide): Asn-805 and Lys-822.

This sequence belongs to the prokaryotic molybdopterin-containing oxidoreductase family. NasA/NapA/NarB subfamily. In terms of assembly, component of the periplasmic nitrate reductase NapAB complex composed of NapA and NapB. Requires [4Fe-4S] cluster as cofactor. The cofactor is Mo-bis(molybdopterin guanine dinucleotide). Predicted to be exported by the Tat system. The position of the signal peptide cleavage has not been experimentally proven.

The protein localises to the periplasm. The enzyme catalyses 2 Fe(II)-[cytochrome] + nitrate + 2 H(+) = 2 Fe(III)-[cytochrome] + nitrite + H2O. Functionally, catalytic subunit of the periplasmic nitrate reductase complex NapAB. Receives electrons from NapB and catalyzes the reduction of nitrate to nitrite. The chain is Periplasmic nitrate reductase from Cupriavidus pinatubonensis (strain JMP 134 / LMG 1197) (Cupriavidus necator (strain JMP 134)).